Reading from the N-terminus, the 188-residue chain is MTAPSCAFPVQFRQPSVSGLSQITKSLYISNGVAANNKLMLSSNQITMVINVSVEVVNTLYEDIQYMQVPVADSPNSRLCDFFDPIADHIHSVEMKQGRTLLHCAAGVSRSAALCLAYLMKYHAMSLLDAHTWTKSCRPIIRPNSGFWEQLIHYEFQLFGKNTVHMVSSPVGMIPDIYEKEVRLMIPL.

The Tyrosine-protein phosphatase domain occupies 19-160 (GLSQITKSLY…LIHYEFQLFG (142 aa)). Catalysis depends on Cys104, which acts as the Phosphocysteine intermediate.

It belongs to the protein-tyrosine phosphatase family. Non-receptor class dual specificity subfamily. As to expression, widely expressed with highest levels in liver, brain, ovary and testis.

The protein localises to the cytoplasm. It is found in the nucleus. The protein resides in the mitochondrion inner membrane. It carries out the reaction O-phospho-L-tyrosyl-[protein] + H2O = L-tyrosyl-[protein] + phosphate. It catalyses the reaction O-phospho-L-seryl-[protein] + H2O = L-seryl-[protein] + phosphate. The enzyme catalyses O-phospho-L-threonyl-[protein] + H2O = L-threonyl-[protein] + phosphate. Its activity is regulated as follows. Activated by manganese ions, inhibited by iodoacetic acid. Its function is as follows. Can dephosphorylate single and diphosphorylated synthetic MAPK peptides, with preference for the phosphotyrosine and diphosphorylated forms over phosphothreonine. In vitro, dephosphorylates p-nitrophenyl phosphate (pNPP). The sequence is that of Dual specificity protein phosphatase 18 (DUSP18) from Homo sapiens (Human).